The primary structure comprises 95 residues: uncharacterized protein (95 aa).

A helical membrane pass occupies residues 12–32 (LASLIVSMVVLVVGLALWFFV). The segment at 66–87 (ANEPEKEAEPATAASEPKEDED) is disordered.

The protein localises to the cell membrane. This is an uncharacterized protein from Salmonella typhi.